Reading from the N-terminus, the 132-residue chain is Translation initiation factor 5A (132 aa).

K36 carries the hypusine modification.

The protein belongs to the eIF-5A family.

It is found in the cytoplasm. Functionally, functions by promoting the formation of the first peptide bond. In Methanosphaera stadtmanae (strain ATCC 43021 / DSM 3091 / JCM 11832 / MCB-3), this protein is Translation initiation factor 5A.